The sequence spans 349 residues: Phenylalanine--tRNA ligase alpha subunit (349 aa).

Glu258 contributes to the Mg(2+) binding site.

The protein belongs to the class-II aminoacyl-tRNA synthetase family. Phe-tRNA synthetase alpha subunit type 1 subfamily. As to quaternary structure, tetramer of two alpha and two beta subunits. Mg(2+) serves as cofactor.

The protein localises to the cytoplasm. The catalysed reaction is tRNA(Phe) + L-phenylalanine + ATP = L-phenylalanyl-tRNA(Phe) + AMP + diphosphate + H(+). This chain is Phenylalanine--tRNA ligase alpha subunit, found in Rickettsia akari (strain Hartford).